Here is a 303-residue protein sequence, read N- to C-terminus: Glycine--tRNA ligase alpha subunit (303 aa).

It belongs to the class-II aminoacyl-tRNA synthetase family. As to quaternary structure, tetramer of two alpha and two beta subunits.

It localises to the cytoplasm. It carries out the reaction tRNA(Gly) + glycine + ATP = glycyl-tRNA(Gly) + AMP + diphosphate. The chain is Glycine--tRNA ligase alpha subunit from Streptococcus equi subsp. equi (strain 4047).